The primary structure comprises 469 residues: Nuclear hormone receptor family member nhr-154 (469 aa).

The segment at residues 80-159 is a DNA-binding region (nuclear receptor); it reads PSKCLVCRNP…VGMNPMAIQA (80 aa). 2 consecutive NR C4-type zinc fingers follow at residues 83–103 and 119–142; these read CLVC…CNGC and CAKQ…CRAC. Positions 230 to 459 constitute an NR LBD domain; the sequence is LDSKPVLVVT…KMGTTFRKCI (230 aa).

This sequence belongs to the nuclear hormone receptor family.

It localises to the nucleus. Functionally, orphan nuclear receptor. This Caenorhabditis elegans protein is Nuclear hormone receptor family member nhr-154 (nhr-154).